The chain runs to 155 residues: 6,7-dimethyl-8-ribityllumazine synthase (155 aa).

Residues F23, A57 to E59, and A81 to I83 contribute to the 5-amino-6-(D-ribitylamino)uracil site. Position 86 to 87 (S86 to T87) interacts with (2S)-2-hydroxy-3-oxobutyl phosphate. Catalysis depends on H89, which acts as the Proton donor. F114 contacts 5-amino-6-(D-ribitylamino)uracil. Residue R128 coordinates (2S)-2-hydroxy-3-oxobutyl phosphate.

Belongs to the DMRL synthase family.

It catalyses the reaction (2S)-2-hydroxy-3-oxobutyl phosphate + 5-amino-6-(D-ribitylamino)uracil = 6,7-dimethyl-8-(1-D-ribityl)lumazine + phosphate + 2 H2O + H(+). Its pathway is cofactor biosynthesis; riboflavin biosynthesis; riboflavin from 2-hydroxy-3-oxobutyl phosphate and 5-amino-6-(D-ribitylamino)uracil: step 1/2. In terms of biological role, catalyzes the formation of 6,7-dimethyl-8-ribityllumazine by condensation of 5-amino-6-(D-ribitylamino)uracil with 3,4-dihydroxy-2-butanone 4-phosphate. This is the penultimate step in the biosynthesis of riboflavin. In Citrifermentans bemidjiense (strain ATCC BAA-1014 / DSM 16622 / JCM 12645 / Bem) (Geobacter bemidjiensis), this protein is 6,7-dimethyl-8-ribityllumazine synthase.